Consider the following 610-residue polypeptide: Phosphomethylpyrimidine synthase (610 aa).

Substrate-binding positions include Asn-216, Met-245, Tyr-274, His-310, 330–332, 371–374, and Glu-410; these read SRG and DGLR. His-414 provides a ligand contact to Zn(2+). A substrate-binding site is contributed by Tyr-437. Residue His-478 coordinates Zn(2+). 3 residues coordinate [4Fe-4S] cluster: Cys-558, Cys-561, and Cys-566.

Belongs to the ThiC family. As to quaternary structure, homodimer. [4Fe-4S] cluster serves as cofactor.

It catalyses the reaction 5-amino-1-(5-phospho-beta-D-ribosyl)imidazole + S-adenosyl-L-methionine = 4-amino-2-methyl-5-(phosphooxymethyl)pyrimidine + CO + 5'-deoxyadenosine + formate + L-methionine + 3 H(+). It participates in cofactor biosynthesis; thiamine diphosphate biosynthesis. In terms of biological role, catalyzes the synthesis of the hydroxymethylpyrimidine phosphate (HMP-P) moiety of thiamine from aminoimidazole ribotide (AIR) in a radical S-adenosyl-L-methionine (SAM)-dependent reaction. This chain is Phosphomethylpyrimidine synthase, found in Allorhizobium ampelinum (strain ATCC BAA-846 / DSM 112012 / S4) (Agrobacterium vitis (strain S4)).